The chain runs to 282 residues: Large ribosomal subunit protein uL2 (282 aa).

Disordered regions lie at residues 31-55 and 223-282; these read KRLT…RHIG and LAMN…NTQR. Composition is skewed to basic residues over residues 34 to 55 and 270 to 282; these read TKPV…RHIG and VTRR…NTQR.

The protein belongs to the universal ribosomal protein uL2 family. As to quaternary structure, part of the 50S ribosomal subunit. Forms a bridge to the 30S subunit in the 70S ribosome.

Functionally, one of the primary rRNA binding proteins. Required for association of the 30S and 50S subunits to form the 70S ribosome, for tRNA binding and peptide bond formation. It has been suggested to have peptidyltransferase activity; this is somewhat controversial. Makes several contacts with the 16S rRNA in the 70S ribosome. In Anaeromyxobacter dehalogenans (strain 2CP-C), this protein is Large ribosomal subunit protein uL2.